Reading from the N-terminus, the 159-residue chain is Ribonuclease P protein component 2 (159 aa).

The protein belongs to the eukaryotic/archaeal RNase P protein component 2 family. In terms of assembly, consists of a catalytic RNA component and at least 4-5 protein subunits.

It localises to the cytoplasm. The catalysed reaction is Endonucleolytic cleavage of RNA, removing 5'-extranucleotides from tRNA precursor.. Functionally, part of ribonuclease P, a protein complex that generates mature tRNA molecules by cleaving their 5'-ends. The protein is Ribonuclease P protein component 2 of Halorubrum lacusprofundi (strain ATCC 49239 / DSM 5036 / JCM 8891 / ACAM 34).